A 370-amino-acid polypeptide reads, in one-letter code: Prolactin-releasing peptide receptor (370 aa).

Over 1 to 62 (MASSTTRGPR…LQLVHQLKGL (62 aa)) the chain is Extracellular. N-linked (GlcNAc...) asparagine glycosylation is found at Asn-27 and Asn-36. Residues 63-83 (IVLLYSVVVVVGLVGNCLLVL) traverse the membrane as a helical segment. At 84-101 (VIARVRRLHNVTNFLIGN) the chain is on the cytoplasmic side. Residues 102–122 (LALSDVLMCTACVPLTLAYAF) form a helical membrane-spanning segment. At 123-126 (EPRG) the chain is on the extracellular side. A helical membrane pass occupies residues 127–147 (WVFGGGLCHLVFFLQPVTVYV). A disulfide bridge connects residues Cys-134 and Cys-211. The Cytoplasmic portion of the chain corresponds to 148–175 (SVFTLTTIAVDRYVVLVHPLRRRISLRL). The helical transmembrane segment at 176-196 (SAYAVLAIWALSAVLALPAAV) threads the bilayer. Topologically, residues 197 to 225 (HTYHVELKPHDVRLCEEFWGSQERQRQLY) are extracellular. Residues 226 to 246 (AWGLLLVTYLLPLLVILLSYV) form a helical membrane-spanning segment. The Cytoplasmic segment spans residues 247–276 (RVSVKLRNRVVPGCVTQSQADWDRARRRRT). The helical transmembrane segment at 277 to 297 (FCLLVVIVVVFAVCWLPLHVF) threads the bilayer. At 298-317 (NLLRDLDPHAIDPYAFGLVQ) the chain is on the extracellular side. The helical transmembrane segment at 318-338 (LLCHWLAMSSACYNPFIYAWL) threads the bilayer. Residues 339 to 369 (HDSFREELRKLLVAWPRKIAPHGQNMTVSVV) are Cytoplasmic-facing. The interval 365 to 370 (TVSVVI) is required for interaction with GRIP1, GRIP2 and PICK1.

This sequence belongs to the G-protein coupled receptor 1 family. In terms of assembly, interacts through its C-terminal region with the PDZ domain-containing proteins GRIP1, GRIP2 and PICK1. Interacts with PDZ domains 4 and 5 of GRIP1 and with the PDZ domain of PICK1. Only detected in the pituitary gland and in all cell types of pituitary adenomas.

It is found in the cell membrane. Its function is as follows. Receptor for prolactin-releasing peptide (PrRP). Implicated in lactation, regulation of food intake and pain-signal processing. This is Prolactin-releasing peptide receptor (PRLHR) from Homo sapiens (Human).